We begin with the raw amino-acid sequence, 750 residues long: Photosystem I P700 chlorophyll a apoprotein A1 (750 aa).

The next 8 helical transmembrane spans lie at 70 to 93 (VFSAHFGQLAVIFIWLSGMYFHGA), 156 to 179 (LYTTAIGGLIFAALMLFAGWFHYH), 195 to 219 (LNHHLAGLLGLGSLAWAGHQVHVSL), 291 to 309 (TAHHHLAIAVLFLVAGHMY), 346 to 369 (WHAQLAINLAMLGSLTIIVAHHMY), 385 to 411 (LSLFTHHMWIGGFLVVGAAAHAAIFMV), 433 to 455 (AIISHLNWVCIFLGFHSFGLYIH), and 531 to 549 (FLVHHIHAFTIHVTVLILL). [4Fe-4S] cluster-binding residues include C573 and C582. Transmembrane regions (helical) follow at residues 589 to 610 (HVFLGLFWMYNAISVVIFHFSW) and 664 to 686 (LSAYGLLFLGAHFVWAFSLMFLF). Chlorophyll a' is bound at residue H675. Positions 683 and 691 each coordinate chlorophyll a. W692 lines the phylloquinone pocket. The chain crosses the membrane as a helical span at residues 724–744 (AVGVAHYLLGGIATTWAFFLA).

The protein belongs to the PsaA/PsaB family. As to quaternary structure, the PsaA/B heterodimer binds the P700 chlorophyll special pair and subsequent electron acceptors. PSI consists of a core antenna complex that captures photons, and an electron transfer chain that converts photonic excitation into a charge separation. The eukaryotic PSI reaction center is composed of at least 11 subunits. P700 is a chlorophyll a/chlorophyll a' dimer, A0 is one or more chlorophyll a, A1 is one or both phylloquinones and FX is a shared 4Fe-4S iron-sulfur center. serves as cofactor.

It localises to the plastid. Its subcellular location is the chloroplast thylakoid membrane. The catalysed reaction is reduced [plastocyanin] + hnu + oxidized [2Fe-2S]-[ferredoxin] = oxidized [plastocyanin] + reduced [2Fe-2S]-[ferredoxin]. In terms of biological role, psaA and PsaB bind P700, the primary electron donor of photosystem I (PSI), as well as the electron acceptors A0, A1 and FX. PSI is a plastocyanin-ferredoxin oxidoreductase, converting photonic excitation into a charge separation, which transfers an electron from the donor P700 chlorophyll pair to the spectroscopically characterized acceptors A0, A1, FX, FA and FB in turn. Oxidized P700 is reduced on the lumenal side of the thylakoid membrane by plastocyanin. The sequence is that of Photosystem I P700 chlorophyll a apoprotein A1 from Physcomitrium patens (Spreading-leaved earth moss).